A 35-amino-acid polypeptide reads, in one-letter code: Dolichyl-diphosphooligosaccharide--protein glycosyltransferase subunit 4B (35 aa).

Residues 1-8 (MFDDQDLG) lie on the Lumenal side of the membrane. A helical transmembrane segment spans residues 9–29 (FFANFLGIFIFIMVIAYHFVV). The Cytoplasmic portion of the chain corresponds to 30–35 (AEPKFE).

Belongs to the OST4 family. In terms of assembly, component of the oligosaccharyltransferase (OST) complex.

Its subcellular location is the endoplasmic reticulum membrane. Its function is as follows. Subunit of the oligosaccharyl transferase (OST) complex that catalyzes the initial transfer of a defined glycan (Glc(3)Man(9)GlcNAc(2) in eukaryotes) from the lipid carrier dolichol-pyrophosphate to an asparagine residue within an Asn-X-Ser/Thr consensus motif in nascent polypeptide chains, the first step in protein N-glycosylation. N-glycosylation occurs cotranslationally and the complex associates with the Sec61 complex at the channel-forming translocon complex that mediates protein translocation across the endoplasmic reticulum (ER). All subunits are required for a maximal enzyme activity. The polypeptide is Dolichyl-diphosphooligosaccharide--protein glycosyltransferase subunit 4B (OST4B) (Arabidopsis thaliana (Mouse-ear cress)).